A 617-amino-acid polypeptide reads, in one-letter code: tRNA uridine 5-carboxymethylaminomethyl modification enzyme MnmG (617 aa).

Residues 9 to 14 (GAGHAG), Val-120, and Thr-175 contribute to the FAD site. Position 267–281 (267–281 (GPRYCPSIEDKVVRF)) interacts with NAD(+). Gln-364 provides a ligand contact to FAD.

This sequence belongs to the MnmG family. As to quaternary structure, homodimer. Heterotetramer of two MnmE and two MnmG subunits. FAD is required as a cofactor.

It is found in the cytoplasm. Its function is as follows. NAD-binding protein involved in the addition of a carboxymethylaminomethyl (cmnm) group at the wobble position (U34) of certain tRNAs, forming tRNA-cmnm(5)s(2)U34. The polypeptide is tRNA uridine 5-carboxymethylaminomethyl modification enzyme MnmG (Onion yellows phytoplasma (strain OY-M)).